We begin with the raw amino-acid sequence, 318 residues long: MTISKFNPQKPFECFIVQSEAMKSAVENAKRFAMFDAPLLIQGETGSGKDLLAKACHYQSLRRDKKFIAVNCAGLPDEDAESEMFGRKVGDSETIGFFEYANKGTVLLDGIAELSLSLQAKLLRFLTDGSFRRVGEEKEHYANVRVICTSQVPLHLLVEQGKVRADLFHRLNVLTINVPALRDRMADIEPLAQGFLQEISEELKIAKPTFDKDFLLYLQKYDWKGNVRELYNTLYRACSLVQDNHLTIESLNLALPQSAVISLDEFENKTLDEIIGFYEAQVLKLFYAEYPSTRKLAQRLGVSHTAIANKLKQYGIGK.

A Sigma-54 factor interaction; truncated domain is found at 15–239; the sequence is FIVQSEAMKS…LYNTLYRACS (225 aa). Residues 43 to 50 and 101 to 110 contribute to the ATP site; these read GETGSGKD and ANKGTVLLDG. The H-T-H motif DNA-binding region spans 292 to 312; the sequence is STRKLAQRLGVSHTAIANKLK.

As to quaternary structure, homodimer. In presence of tyrosine (or high concentrations of phenylalanine or tryptophan) and ATP, it self-associates to form a hexamer.

The protein localises to the cytoplasm. With respect to regulation, the DNA binding ability is drastically reduced in the presence of ATP. Tyrosine further reduces the binding affinity of TyrR in the presence of ATP. Functionally, transcriptional regulator of the TyrR regulon, which includes a number of genes coding for proteins involved in the biosynthesis or transport of the three aromatic amino acids, phenylalanine, tyrosine and tryptophan. These three aromatic amino acids act as effectors which bind to the TyrR protein to form an active regulatory protein. Acts by binding specifically to TyrR boxes in the promoter region of the target genes. Can efficiently repress the transcription of the aroF promoter, but lacks the ability to function as a transcriptional activator. The sequence is that of HTH-type transcriptional regulatory protein TyrR from Haemophilus influenzae (strain ATCC 51907 / DSM 11121 / KW20 / Rd).